A 679-amino-acid chain; its full sequence is G-protein-signaling modulator 2 (679 aa).

Positions 22–357 are important for interaction with NUMA1; INSC and FRMPD1; that stretch reads ASCLELALEG…HLEISREVGD (336 aa). 8 TPR repeats span residues 24 to 57, 62 to 95, 102 to 135, 142 to 184, 202 to 235, 242 to 275, 282 to 315, and 322 to 355; these read CLEL…GTED, SAIY…ARTI, AKAS…SREL, ARAL…AVDL, GRAF…AKEF, RRAY…ARQL, AQSC…AQEL, and GRAC…SREV. Serine 408 and serine 484 each carry phosphoserine. Threonine 487 carries the post-translational modification Phosphothreonine. One can recognise a GoLoco 1 domain in the interval 490–512; that stretch reads DEGFFDLLRRFQSNRMDDQRCHL. Phosphoserine occurs at positions 540 and 564. 3 GoLoco domains span residues 543 to 565, 594 to 616, and 628 to 650; these read TDEF…RASF, DEDF…RCAP, and DEDF…RVLL. Residues arginine 608, arginine 613, arginine 642, and arginine 647 each contribute to the GDP site.

This sequence belongs to the GPSM family. Interacts with the dynein-dynactin complex; this interaction is inhibited in a PLK1-dependent manner. Part of a spindle orientation complex at least composed of GNAI1, GPSM2 and NUMA1. Interacts with LLGL2. Interacts (via TPR repeat region) with INSC/inscuteable. Interacts (via TPR repeat region) with NUMA1 (via C-terminus); this interaction is direct, inhibited in a PLK1-dependent manner and promotes spindle pole organization. INSC and NUMA1 compete for the same binding site, but INSC has higher affinity and can displace NUMA1 (in vitro). Interacts with GNAI2. Interacts (via GoLoco domains) with the GDP-bound form of GNAI1 and GNAI3; has much lower affinity for the GTP-bound form. Interaction with GDP-bound GNAI3 strongly enhances the affinity for NUMA1. Interacts (via TPR repeat region) with FRMPD1. INSC and FRMPD1 compete for the same binding site, but INSC has higher affinity and can displace FRMPD1 (in vitro). Interacts (via TPR repeat region) with FRMPD4. Identified in a complex with INSC and F2RL2/Par3. Interacts with TASOR. In terms of tissue distribution, detected in brain and liver (at protein level). Detected in brain, spleen, liver and testis, and at lower levels in heart, lung and kidney. Enriched in the ventricular zone of the developing central nervous systems. Expressed in proximal colon, ileum, ovary, Sertoli cells of the testis and granular cells within the cerebellum.

Its subcellular location is the cytoplasm. The protein resides in the cell cortex. The protein localises to the cytoskeleton. It is found in the spindle pole. It localises to the lateral cell membrane. Functionally, plays an important role in mitotic spindle pole organization via its interaction with NUMA1. Required for cortical dynein-dynactin complex recruitment during metaphase. Plays a role in metaphase spindle orientation. Plays an important role in asymmetric cell divisions. Has guanine nucleotide dissociation inhibitor (GDI) activity towards G(i) alpha proteins, such as GNAI1 and GNAI3, and thereby regulates their activity. The sequence is that of G-protein-signaling modulator 2 (Gpsm2) from Mus musculus (Mouse).